A 603-amino-acid polypeptide reads, in one-letter code: UvrABC system protein C (603 aa).

The 78-residue stretch at 15–92 (DQPGCYLMKD…IKKHDPRFNI (78 aa)) folds into the GIY-YIG domain. In terms of domain architecture, UVR spans 197 to 232 (KTVKNDLMKKMQEAAENMEFEKAGEFRDQINAIETT).

Belongs to the UvrC family. Interacts with UvrB in an incision complex.

It is found in the cytoplasm. Its function is as follows. The UvrABC repair system catalyzes the recognition and processing of DNA lesions. UvrC both incises the 5' and 3' sides of the lesion. The N-terminal half is responsible for the 3' incision and the C-terminal half is responsible for the 5' incision. This Listeria monocytogenes serotype 4b (strain CLIP80459) protein is UvrABC system protein C.